Reading from the N-terminus, the 105-residue chain is Large ribosomal subunit protein bL21 (105 aa).

This sequence belongs to the bacterial ribosomal protein bL21 family. Part of the 50S ribosomal subunit. Contacts protein L20.

In terms of biological role, this protein binds to 23S rRNA in the presence of protein L20. This chain is Large ribosomal subunit protein bL21, found in Rhizobium johnstonii (strain DSM 114642 / LMG 32736 / 3841) (Rhizobium leguminosarum bv. viciae).